A 972-amino-acid polypeptide reads, in one-letter code: Isoleucine--tRNA ligase (972 aa).

The 'HIGH' region motif lies at 63-73 (PYANGNIHIGH). Glu603 serves as a coordination point for L-isoleucyl-5'-AMP. Positions 644–648 (KMSKS) match the 'KMSKS' region motif. An ATP-binding site is contributed by Lys647.

Belongs to the class-I aminoacyl-tRNA synthetase family. IleS type 1 subfamily. In terms of assembly, monomer.

It localises to the cytoplasm. The catalysed reaction is tRNA(Ile) + L-isoleucine + ATP = L-isoleucyl-tRNA(Ile) + AMP + diphosphate. Catalyzes the attachment of isoleucine to tRNA(Ile). As IleRS can inadvertently accommodate and process structurally similar amino acids such as valine, to avoid such errors it has two additional distinct tRNA(Ile)-dependent editing activities. One activity is designated as 'pretransfer' editing and involves the hydrolysis of activated Val-AMP. The other activity is designated 'posttransfer' editing and involves deacylation of mischarged Val-tRNA(Ile). In Brucella abortus (strain 2308), this protein is Isoleucine--tRNA ligase.